The following is a 422-amino-acid chain: UDP-N-acetylglucosamine 1-carboxyvinyltransferase (422 aa).

A phosphoenolpyruvate-binding site is contributed by 22–23 (KN). Arg95 provides a ligand contact to UDP-N-acetyl-alpha-D-glucosamine. Cys119 serves as the catalytic Proton donor. The residue at position 119 (Cys119) is a 2-(S-cysteinyl)pyruvic acid O-phosphothioketal. UDP-N-acetyl-alpha-D-glucosamine-binding positions include 124–128 (RPIDQ), Asp309, and Val331.

It belongs to the EPSP synthase family. MurA subfamily.

It is found in the cytoplasm. It catalyses the reaction phosphoenolpyruvate + UDP-N-acetyl-alpha-D-glucosamine = UDP-N-acetyl-3-O-(1-carboxyvinyl)-alpha-D-glucosamine + phosphate. It participates in cell wall biogenesis; peptidoglycan biosynthesis. Cell wall formation. Adds enolpyruvyl to UDP-N-acetylglucosamine. This Anaeromyxobacter dehalogenans (strain 2CP-1 / ATCC BAA-258) protein is UDP-N-acetylglucosamine 1-carboxyvinyltransferase.